The primary structure comprises 152 residues: Cell division protein SepF (152 aa).

Basic and acidic residues predominate over residues 23–32 (EVAREPEPMQ). The segment at 23-42 (EVAREPEPMQKKTKKEKPSK) is disordered.

It belongs to the SepF family. In terms of assembly, homodimer. Interacts with FtsZ.

The protein localises to the cytoplasm. Functionally, cell division protein that is part of the divisome complex and is recruited early to the Z-ring. Probably stimulates Z-ring formation, perhaps through the cross-linking of FtsZ protofilaments. Its function overlaps with FtsA. This is Cell division protein SepF from Listeria innocua serovar 6a (strain ATCC BAA-680 / CLIP 11262).